Reading from the N-terminus, the 245-residue chain is 1-(5-phosphoribosyl)-5-[(5-phosphoribosylamino)methylideneamino] imidazole-4-carboxamide isomerase (245 aa).

The Proton acceptor role is filled by Asp-7. Residue Asp-129 is the Proton donor of the active site.

Belongs to the HisA/HisF family.

Its subcellular location is the cytoplasm. The catalysed reaction is 1-(5-phospho-beta-D-ribosyl)-5-[(5-phospho-beta-D-ribosylamino)methylideneamino]imidazole-4-carboxamide = 5-[(5-phospho-1-deoxy-D-ribulos-1-ylimino)methylamino]-1-(5-phospho-beta-D-ribosyl)imidazole-4-carboxamide. Its pathway is amino-acid biosynthesis; L-histidine biosynthesis; L-histidine from 5-phospho-alpha-D-ribose 1-diphosphate: step 4/9. This is 1-(5-phosphoribosyl)-5-[(5-phosphoribosylamino)methylideneamino] imidazole-4-carboxamide isomerase from Shewanella halifaxensis (strain HAW-EB4).